Consider the following 457-residue polypeptide: tRNA-2-methylthio-N(6)-dimethylallyladenosine synthase (457 aa).

Positions 3-120 (KKVYVKTFGC…LPQMIDARRE (118 aa)) constitute an MTTase N-terminal domain. Residues Cys-12, Cys-49, Cys-83, Cys-157, Cys-161, and Cys-164 each contribute to the [4Fe-4S] cluster site. A Radical SAM core domain is found at 143-377 (RVEGPSAFVS…QATIEENVAR (235 aa)). The region spanning 380–447 (QSMVGKVERI…PHSLRGELVL (68 aa)) is the TRAM domain.

This sequence belongs to the methylthiotransferase family. MiaB subfamily. As to quaternary structure, monomer. [4Fe-4S] cluster serves as cofactor.

It is found in the cytoplasm. The enzyme catalyses N(6)-dimethylallyladenosine(37) in tRNA + (sulfur carrier)-SH + AH2 + 2 S-adenosyl-L-methionine = 2-methylsulfanyl-N(6)-dimethylallyladenosine(37) in tRNA + (sulfur carrier)-H + 5'-deoxyadenosine + L-methionine + A + S-adenosyl-L-homocysteine + 2 H(+). Its function is as follows. Catalyzes the methylthiolation of N6-(dimethylallyl)adenosine (i(6)A), leading to the formation of 2-methylthio-N6-(dimethylallyl)adenosine (ms(2)i(6)A) at position 37 in tRNAs that read codons beginning with uridine. The sequence is that of tRNA-2-methylthio-N(6)-dimethylallyladenosine synthase from Burkholderia lata (strain ATCC 17760 / DSM 23089 / LMG 22485 / NCIMB 9086 / R18194 / 383).